The following is a 396-amino-acid chain: MIQTKDIIELTDTYGANNYHPLPIVISKAEGVWVEDPEGNRYMDLLSAYSAVNQGHRHPKIINALIDQANRVTLTSRAFHSDQLGPWYEKVAKLTNKEMVLPMNTGAEAVETAIKTARRWAYDVKKVEANRAEIIVCEDNFHGRTMGAVSMSSNEEYKRGFGPMLPGIIVIPYGDLEALKAAITPNTAAFILEPIQGEAGINIPPAGFLKEALEVCKKENVLFVADEIQTGLGRTGKVFACDWDNVTPDMYILGKALGGGVFPISCAAANRDILGVFEPGSHGSTFGGNPLACAVSIAALEVLEEEKLTERSLQLGEKLVGQLKEIDNPMITEVRGKGLFIGIELNEPARPYCEQLKAAGLLCKETHENVIRIAPPLVISEEDLEWAFQKIKAVLS.

K255 is modified (N6-(pyridoxal phosphate)lysine).

Belongs to the class-III pyridoxal-phosphate-dependent aminotransferase family. OAT subfamily. Pyridoxal 5'-phosphate serves as cofactor.

It is found in the cytoplasm. It carries out the reaction a 2-oxocarboxylate + L-ornithine = L-glutamate 5-semialdehyde + an L-alpha-amino acid. Its pathway is amino-acid biosynthesis; L-proline biosynthesis; L-glutamate 5-semialdehyde from L-ornithine: step 1/1. Functionally, catalyzes the interconversion of ornithine to glutamate semialdehyde. The polypeptide is Ornithine aminotransferase (Bacillus anthracis (strain A0248)).